The primary structure comprises 203 residues: Molybdenum cofactor guanylyltransferase (203 aa).

Residues 12 to 14 (LAG), lysine 25, asparagine 53, aspartate 71, and aspartate 101 each bind GTP. A Mg(2+)-binding site is contributed by aspartate 101.

This sequence belongs to the MobA family. Monomer. Mg(2+) serves as cofactor.

It localises to the cytoplasm. It catalyses the reaction Mo-molybdopterin + GTP + H(+) = Mo-molybdopterin guanine dinucleotide + diphosphate. In terms of biological role, transfers a GMP moiety from GTP to Mo-molybdopterin (Mo-MPT) cofactor (Moco or molybdenum cofactor) to form Mo-molybdopterin guanine dinucleotide (Mo-MGD) cofactor. This is Molybdenum cofactor guanylyltransferase from Methylibium petroleiphilum (strain ATCC BAA-1232 / LMG 22953 / PM1).